The chain runs to 673 residues: DNA ligase (673 aa).

Residues 33–37 (DAEYD), 82–83 (SL), and E114 contribute to the NAD(+) site. Residue K116 is the N6-AMP-lysine intermediate of the active site. Positions 137, 174, 291, and 315 each coordinate NAD(+). The Zn(2+) site is built by C409, C412, C427, and C433. The BRCT domain occupies 592 to 673 (AQEQPLAGLV…LINLLEQHNG (82 aa)).

The protein belongs to the NAD-dependent DNA ligase family. LigA subfamily. Mg(2+) is required as a cofactor. Mn(2+) serves as cofactor.

It carries out the reaction NAD(+) + (deoxyribonucleotide)n-3'-hydroxyl + 5'-phospho-(deoxyribonucleotide)m = (deoxyribonucleotide)n+m + AMP + beta-nicotinamide D-nucleotide.. In terms of biological role, DNA ligase that catalyzes the formation of phosphodiester linkages between 5'-phosphoryl and 3'-hydroxyl groups in double-stranded DNA using NAD as a coenzyme and as the energy source for the reaction. It is essential for DNA replication and repair of damaged DNA. This Pseudoalteromonas translucida (strain TAC 125) protein is DNA ligase.